The following is a 560-amino-acid chain: Cytosolic purine 5'-nucleotidase (560 aa).

Catalysis depends on Asp52, which acts as the Nucleophile. The IMP site is built by Asp52 and Asp54. Mg(2+) is bound by residues Asp52 and Asp54. Asp54 serves as the catalytic Proton donor. Residues Arg144 and Asn154 each contribute to the ATP site. Residues Arg202, Asp206, Lys215, Thr249, Asn250, Ser251, and Lys292 each coordinate IMP. Asp351 lines the Mg(2+) pocket. A Phosphoserine modification is found at Ser418. ATP is bound by residues Gln453 and Arg456. 3 positions are modified to phosphoserine: Ser502, Ser511, and Ser527. Residues 541 to 560 (PQEITHCHDEDDDEEEEEEE) are disordered. Residues 548–560 (HDEDDDEEEEEEE) are required for tetramer assembly. Residues 550–560 (EDDDEEEEEEE) are compositionally biased toward acidic residues.

It belongs to the 5'(3')-deoxyribonucleotidase family. As to quaternary structure, homotetramer. Requires Mg(2+) as cofactor.

The protein localises to the cytoplasm. It localises to the cytosol. It catalyses the reaction a ribonucleoside 5'-phosphate + H2O = a ribonucleoside + phosphate. The catalysed reaction is a 2'-deoxyribonucleoside + a ribonucleoside 5'-phosphate = a ribonucleoside + a 2'-deoxyribonucleoside 5'-phosphate. It carries out the reaction IMP + H2O = inosine + phosphate. The enzyme catalyses GMP + H2O = guanosine + phosphate. It catalyses the reaction dGMP + H2O = 2'-deoxyguanosine + phosphate. The catalysed reaction is dIMP + H2O = 2'-deoxyinosine + phosphate. It carries out the reaction XMP + H2O = xanthosine + phosphate. The enzyme catalyses inosine + GMP = guanosine + IMP. It catalyses the reaction dGMP + inosine = 2'-deoxyguanosine + IMP. The catalysed reaction is dIMP + inosine = 2'-deoxyinosine + IMP. It carries out the reaction inosine + UMP = uridine + IMP. The enzyme catalyses inosine + CMP = cytidine + IMP. It catalyses the reaction inosine + AMP = IMP + adenosine. With respect to regulation, allosterically activated by various compounds including ATP, 2,3-BPG/2,3-Bisphosphoglyceric acid and Ap4A/P1,P4-bis(5'-adenosyl) tetraphosphate. Binding of an allosteric activator is a prerequisiste to magnesium and substrate binding. Inhibited by inorganic phosphate. In terms of biological role, broad specificity cytosolic 5'-nucleotidase that catalyzes the dephosphorylation of 6-hydroxypurine nucleoside 5'-monophosphates. In addition, possesses a phosphotransferase activity by which it can transfer a phosphate from a donor nucleoside monophosphate to an acceptor nucleoside, preferably inosine, deoxyinosine and guanosine. Has the highest activities for IMP and GMP followed by dIMP, dGMP and XMP. Could also catalyze the transfer of phosphates from pyrimidine monophosphates but with lower efficiency. Through these activities regulates the purine nucleoside/nucleotide pools within the cell. The chain is Cytosolic purine 5'-nucleotidase from Mus musculus (Mouse).